The chain runs to 38 residues: Photosystem II reaction center protein L (38 aa).

Residues 17-37 (SLYWGLLLIFVLAILFSSYIF) form a helical membrane-spanning segment.

Belongs to the PsbL family. As to quaternary structure, PSII is composed of 1 copy each of membrane proteins PsbA, PsbB, PsbC, PsbD, PsbE, PsbF, PsbH, PsbI, PsbJ, PsbK, PsbL, PsbM, PsbT, PsbX, PsbY, PsbZ, Psb30/Ycf12, at least 3 peripheral proteins of the oxygen-evolving complex and a large number of cofactors. It forms dimeric complexes.

It localises to the plastid. It is found in the chloroplast thylakoid membrane. Functionally, one of the components of the core complex of photosystem II (PSII). PSII is a light-driven water:plastoquinone oxidoreductase that uses light energy to abstract electrons from H(2)O, generating O(2) and a proton gradient subsequently used for ATP formation. It consists of a core antenna complex that captures photons, and an electron transfer chain that converts photonic excitation into a charge separation. This subunit is found at the monomer-monomer interface and is required for correct PSII assembly and/or dimerization. This is Photosystem II reaction center protein L from Nephroselmis olivacea (Green alga).